The primary structure comprises 75 residues: Putative UPF0377 protein YJL222W-A (75 aa).

The protein belongs to the UPF0377 family.

This Saccharomyces cerevisiae (strain ATCC 204508 / S288c) (Baker's yeast) protein is Putative UPF0377 protein YJL222W-A.